We begin with the raw amino-acid sequence, 295 residues long: Probable lipid kinase YegS-like (295 aa).

The region spanning 1–129 (MQGRKAMLVL…IDLGQAGDQL (129 aa)) is the DAGKc domain. ATP is bound by residues threonine 39, 65-71 (GDGTLRD), and threonine 92. Mg(2+) contacts are provided by methionine 210, aspartate 213, and leucine 215. Glutamate 264 acts as the Proton acceptor in catalysis.

This sequence belongs to the diacylglycerol/lipid kinase family. YegS lipid kinase subfamily. It depends on Mg(2+) as a cofactor. Ca(2+) serves as cofactor.

It is found in the cytoplasm. Functionally, probably phosphorylates lipids; the in vivo substrate is unknown. This chain is Probable lipid kinase YegS-like, found in Pseudomonas putida (strain ATCC 47054 / DSM 6125 / CFBP 8728 / NCIMB 11950 / KT2440).